Consider the following 406-residue polypeptide: Transcriptional activator NprA (406 aa).

TPR repeat units follow at residues 125–158 (YYYY…FRSQ), 206–239 (AECH…AQII), 246–279 (GTIE…KRNS), and 285–318 (FITL…LKRE).

In terms of biological role, activates the transcription of nprS by about five fold. May bind to the upstream region of nprS promoter. In Geobacillus stearothermophilus (Bacillus stearothermophilus), this protein is Transcriptional activator NprA (nprA).